A 400-amino-acid chain; its full sequence is D-alanyl-D-alanine carboxypeptidase DacC (400 aa).

An N-terminal signal peptide occupies residues 1 to 27; the sequence is MTQYSSLLRGLAAGSAFLFLFAPTAFA. Ser66 serves as the catalytic Acyl-ester intermediate. Lys69 serves as the catalytic Proton acceptor. Ser132 is a catalytic residue. Lys235 is a substrate binding site. The required for inner membrane binding stretch occupies residues 383–400; that stretch reads VWDFVMMKFHQWFGSWFS.

Belongs to the peptidase S11 family.

The protein resides in the cell inner membrane. The enzyme catalyses Preferential cleavage: (Ac)2-L-Lys-D-Ala-|-D-Ala. Also transpeptidation of peptidyl-alanyl moieties that are N-acyl substituents of D-alanine.. It functions in the pathway cell wall biogenesis; peptidoglycan biosynthesis. Removes C-terminal D-alanyl residues from sugar-peptide cell wall precursors. The chain is D-alanyl-D-alanine carboxypeptidase DacC (dacC) from Escherichia coli (strain K12).